Reading from the N-terminus, the 213-residue chain is Small ribosomal subunit protein uS3 (213 aa).

A KH type-2 domain is found at 38 to 106 (IRKYVKKTLY…EFSIEVNEIR (69 aa)).

This sequence belongs to the universal ribosomal protein uS3 family. Part of the 30S ribosomal subunit. Forms a tight complex with proteins S10 and S14.

Its function is as follows. Binds the lower part of the 30S subunit head. Binds mRNA in the 70S ribosome, positioning it for translation. The polypeptide is Small ribosomal subunit protein uS3 (Oleidesulfovibrio alaskensis (strain ATCC BAA-1058 / DSM 17464 / G20) (Desulfovibrio alaskensis)).